The following is a 723-amino-acid chain: BBSome complex assembly protein BBS10 (723 aa).

The protein belongs to the TCP-1 chaperonin family. Component of a complex composed at least of MKKS, BBS10, BBS12, TCP1, CCT2, CCT3, CCT4, CCT5 and CCT8.

It is found in the cell projection. The protein resides in the cilium. Its function is as follows. Probable molecular chaperone that assists the folding of proteins upon ATP hydrolysis. Plays a role in the assembly of BBSome, a complex involved in ciliogenesis regulating transports vesicles to the cilia. Involved in adipogenic differentiation. The polypeptide is BBSome complex assembly protein BBS10 (BBS10) (Homo sapiens (Human)).